The primary structure comprises 1131 residues: PolyA-specific ribonuclease subunit panl-2 (1131 aa).

One can recognise a USP domain in the interval 489–864 (VTMQSTHGMN…LPALLAYKKK (376 aa)). In terms of domain architecture, Exonuclease spans 909-1074 (VGLDAEFIKI…VDARYALKLY (166 aa)). Residues 1104 to 1115 (QTSSPLVVSTTR) are compositionally biased toward polar residues. The interval 1104–1131 (QTSSPLVVSTTRKTPEDTNPADAAPKSV) is disordered.

The protein is PolyA-specific ribonuclease subunit panl-2 of Caenorhabditis elegans.